The primary structure comprises 210 residues: tRNA (guanine-N(7)-)-methyltransferase (210 aa).

S-adenosyl-L-methionine-binding residues include Glu-43, Glu-68, Asp-95, and Asp-117. Asp-117 is an active-site residue. Substrate contacts are provided by residues Lys-121, Asp-153, and 190–193 (TEYE).

Belongs to the class I-like SAM-binding methyltransferase superfamily. TrmB family.

The enzyme catalyses guanosine(46) in tRNA + S-adenosyl-L-methionine = N(7)-methylguanosine(46) in tRNA + S-adenosyl-L-homocysteine. It functions in the pathway tRNA modification; N(7)-methylguanine-tRNA biosynthesis. Its function is as follows. Catalyzes the formation of N(7)-methylguanine at position 46 (m7G46) in tRNA. The chain is tRNA (guanine-N(7)-)-methyltransferase from Macrococcus caseolyticus (strain JCSC5402) (Macrococcoides caseolyticum).